The chain runs to 667 residues: Smc-like protein Sph2 (667 aa).

2 coiled-coil regions span residues 153–295 (GSIQ…SLAT) and 355–517 (GRLD…AITA).

Belongs to the Sph1/Sph2 family.

It localises to the cytoplasm. Functionally, may play a role in replication. The sequence is that of Smc-like protein Sph2 (sph2) from Halobacterium salinarum (strain ATCC 29341 / DSM 671 / R1).